We begin with the raw amino-acid sequence, 264 residues long: 3'-5' ssDNA/RNA exonuclease TatD (264 aa).

Positions 92, 128, and 153 each coordinate a divalent metal cation.

It belongs to the metallo-dependent hydrolases superfamily. TatD-type hydrolase family. TatD subfamily. As to quaternary structure, monomer. Mg(2+) serves as cofactor.

Its subcellular location is the cytoplasm. Its function is as follows. 3'-5' exonuclease that prefers single-stranded DNA and RNA. May play a role in the H(2)O(2)-induced DNA damage repair. This Musicola paradisiaca (strain Ech703) (Dickeya paradisiaca) protein is 3'-5' ssDNA/RNA exonuclease TatD.